A 166-amino-acid polypeptide reads, in one-letter code: NADH-quinone oxidoreductase subunit C (166 aa).

The protein belongs to the complex I 30 kDa subunit family. As to quaternary structure, NDH-1 is composed of 14 different subunits. Subunits NuoB, C, D, E, F, and G constitute the peripheral sector of the complex.

It localises to the cell inner membrane. It catalyses the reaction a quinone + NADH + 5 H(+)(in) = a quinol + NAD(+) + 4 H(+)(out). NDH-1 shuttles electrons from NADH, via FMN and iron-sulfur (Fe-S) centers, to quinones in the respiratory chain. The immediate electron acceptor for the enzyme in this species is believed to be a menaquinone. Couples the redox reaction to proton translocation (for every two electrons transferred, four hydrogen ions are translocated across the cytoplasmic membrane), and thus conserves the redox energy in a proton gradient. The protein is NADH-quinone oxidoreductase subunit C of Chlorobium phaeobacteroides (strain DSM 266 / SMG 266 / 2430).